The sequence spans 486 residues: Small ribosomal subunit protein uS17B (486 aa).

Positions 1-112 (MRDIGINGIK…IENKSNINFV (112 aa)) are 30S ribosomal protein S17. The segment at 113 to 486 (DNLLNVDDKW…ELWTRKNYKS (374 aa)) is unknown.

The protein belongs to the universal ribosomal protein uS17 family. As to quaternary structure, part of the 30S ribosomal subunit.

One of the primary rRNA binding proteins, it binds specifically to the 5'-end of 16S ribosomal RNA. In Methanosarcina acetivorans (strain ATCC 35395 / DSM 2834 / JCM 12185 / C2A), this protein is Small ribosomal subunit protein uS17B.